A 159-amino-acid polypeptide reads, in one-letter code: SsrA-binding protein (159 aa).

The disordered stretch occupies residues 137 to 159 (KRQTEKERDWEREKQRLFQRDQR).

This sequence belongs to the SmpB family.

The protein localises to the cytoplasm. In terms of biological role, required for rescue of stalled ribosomes mediated by trans-translation. Binds to transfer-messenger RNA (tmRNA), required for stable association of tmRNA with ribosomes. tmRNA and SmpB together mimic tRNA shape, replacing the anticodon stem-loop with SmpB. tmRNA is encoded by the ssrA gene; the 2 termini fold to resemble tRNA(Ala) and it encodes a 'tag peptide', a short internal open reading frame. During trans-translation Ala-aminoacylated tmRNA acts like a tRNA, entering the A-site of stalled ribosomes, displacing the stalled mRNA. The ribosome then switches to translate the ORF on the tmRNA; the nascent peptide is terminated with the 'tag peptide' encoded by the tmRNA and targeted for degradation. The ribosome is freed to recommence translation, which seems to be the essential function of trans-translation. The sequence is that of SsrA-binding protein from Cellvibrio japonicus (strain Ueda107) (Pseudomonas fluorescens subsp. cellulosa).